We begin with the raw amino-acid sequence, 509 residues long: Heat shock 70 kDa protein 14 (509 aa).

This sequence belongs to the heat shock protein 70 family. Component of ribosome-associated complex (RAC), a heterodimer composed of Hsp70/DnaK-type chaperone HSPA14 and Hsp40/DnaJ-type chaperone DNAJC2.

The protein localises to the cytoplasm. It is found in the cytosol. Functionally, component of the ribosome-associated complex (RAC), a complex involved in folding or maintaining nascent polypeptides in a folding-competent state. In the RAC complex, binds to the nascent polypeptide chain, while DNAJC2 stimulates its ATPase activity. The protein is Heat shock 70 kDa protein 14 (HSPA14) of Macaca fascicularis (Crab-eating macaque).